Consider the following 583-residue polypeptide: CD166 antigen (583 aa).

The first 27 residues, 1 to 27 (MESKGASSCRLLFCLLISATVFRPGLG), serve as a signal peptide directing secretion. 2 Ig-like V-type domains span residues 28–120 (WYTV…TEDN) and 125–234 (PTIV…KTIH). The Extracellular portion of the chain corresponds to 28-527 (WYTVNSAYGD…NREKVNDQAK (500 aa)). 2 disulfide bridges follow: Cys-43/Cys-113 and Cys-157/Cys-220. Residues Asn-91, Asn-95, Asn-167, Asn-265, Asn-306, Asn-361, Asn-457, Asn-480, and Asn-499 are each glycosylated (N-linked (GlcNAc...) asparagine). 3 Ig-like C2-type domains span residues 245–328 (PTEQ…TAIT), 333–409 (DLSL…ESLT), and 416–501 (PQIK…LNVS). Cystine bridges form between Cys-270-Cys-313, Cys-354-Cys-392, and Cys-435-Cys-485. The helical transmembrane segment at 528–549 (LIVGIVVGLLLAALVAGVVYWL) threads the bilayer. The Cytoplasmic segment spans residues 550–583 (YMKKSKTASKHVNKDLGNMEENKKLEENNHKTEA). The interval 562–583 (NKDLGNMEENKKLEENNHKTEA) is disordered. Over residues 569–583 (EENKKLEENNHKTEA) the composition is skewed to basic and acidic residues.

Homodimer. Interacts (via extracellular domain) with CD6 (via extracellular domain). Homodimerization and interaction with CD6 involve the same region and cannot occur simultaneously. The affinity for CD6 is much higher than the affinity for self-association. Interacts (via glycosylated extracellular domain) with LGALS1 and LGALS3. Interaction with LGALS1 or LGALS3 inhibits interaction with CD6. Glycosylated. As to expression, detected on hematopoietic stem cells derived from umbilical cord blood. Detected on lymph vessel endothelial cells, skin and tonsil. Detected on peripheral blood monocytes. Detected on monocyte-derived dendritic cells (at protein level). Detected at low levels in spleen, placenta, liver. Expressed by activated T-cells, B-cells, monocytes and thymic epithelial cells. Isoform 1 and isoform 3 are detected in vein and artery endothelial cells, astrocytes, keratinocytes and artery smooth muscle cells. Expressed by neurons in the brain. Restricted expression in tumor cell lines. Detected in highly metastasizing melanoma cell lines.

It is found in the cell membrane. The protein resides in the cell projection. The protein localises to the axon. Its subcellular location is the dendrite. It localises to the secreted. Functionally, cell adhesion molecule that mediates both heterotypic cell-cell contacts via its interaction with CD6, as well as homotypic cell-cell contacts. Promotes T-cell activation and proliferation via its interactions with CD6. Contributes to the formation and maturation of the immunological synapse via its interactions with CD6. Mediates homotypic interactions with cells that express ALCAM. Acts as a ligand for the LILRB4 receptor, enhancing LILRB4-mediated inhibition of T cell proliferation. Required for normal hematopoietic stem cell engraftment in the bone marrow. Mediates attachment of dendritic cells onto endothelial cells via homotypic interaction. Inhibits endothelial cell migration and promotes endothelial tube formation via homotypic interactions. Required for normal organization of the lymph vessel network. Required for normal hematopoietic stem cell engraftment in the bone marrow. Plays a role in hematopoiesis; required for normal numbers of hematopoietic stem cells in bone marrow. Promotes in vitro osteoblast proliferation and differentiation. Promotes neurite extension, axon growth and axon guidance; axons grow preferentially on surfaces that contain ALCAM. Mediates outgrowth and pathfinding for retinal ganglion cell axons. In terms of biological role, inhibits activities of membrane-bound isoforms by competing for the same interaction partners. Inhibits cell attachment via homotypic interactions. Promotes endothelial cell migration. Inhibits endothelial cell tube formation. The sequence is that of CD166 antigen (ALCAM) from Homo sapiens (Human).